A 288-amino-acid polypeptide reads, in one-letter code: Oxaloacetate decarboxylase (288 aa).

Ser-47 is a binding site for substrate. Asp-85 is a Mg(2+) binding site. Residues Arg-156 and His-232 each coordinate substrate.

This sequence belongs to the isocitrate lyase/PEP mutase superfamily. Oxaloacetate decarboxylase family. Homotetramer; dimer of dimers. The cofactor is Mg(2+).

The catalysed reaction is oxaloacetate + H(+) = pyruvate + CO2. Its function is as follows. Catalyzes the decarboxylation of oxaloacetate into pyruvate. Seems to play a role in maintaining cellular concentrations of bicarbonate and pyruvate. The chain is Oxaloacetate decarboxylase from Rhodopseudomonas palustris (strain ATCC BAA-98 / CGA009).